A 314-amino-acid chain; its full sequence is Cell division protein FtsQ (314 aa).

Composition is skewed to basic and acidic residues over residues 1 to 15 and 30 to 57; these read MTEH…RVAD and ESKD…ERRA. Residues 1–57 form a disordered region; the sequence is MTEHNEDPQIERVADDAADEEAVTEPLATESKDEPAEHPEFEGPRRRARRERAERRA. The Cytoplasmic segment spans residues 1–99; that stretch reads MTEHNEDPQI…AARGVVRGLK (99 aa). The helical transmembrane segment at 100-120 threads the bilayer; sequence ALLATVVLAVVGIGLGLALYF. The Extracellular segment spans residues 121–314; sequence TPAMSAREIV…VSSPDLPTVK (194 aa). The POTRA domain occupies 124 to 192; that stretch reads MSAREIVIIG…SALRITIVER (69 aa).

This sequence belongs to the FtsQ/DivIB family. FtsQ subfamily.

Its subcellular location is the cell membrane. Its function is as follows. Essential cell division protein. The chain is Cell division protein FtsQ from Mycobacterium bovis (strain ATCC BAA-935 / AF2122/97).